The following is a 490-amino-acid chain: Solute carrier family 2, facilitated glucose transporter member 1 (490 aa).

The Cytoplasmic portion of the chain corresponds to 1–10 (MESGSKMTAR). Residues 11–32 (LMLAVGGAVLGSLQFGYNTGVI) form a helical membrane-spanning segment. At 33-65 (NRPQKVIEDFYNHTWLYRYEEPISPATLTTLWS) the chain is on the extracellular side. The N-linked (GlcNAc...) asparagine glycan is linked to N44. Residues 66-86 (LSVAIFSVGGMIGSFSVGLFV) traverse the membrane as a helical segment. Residues 87–89 (NRF) are Cytoplasmic-facing. A helical transmembrane segment spans residues 90-111 (GRRNSMLMSNILAFLAAVLMGF). Residues 112 to 119 (SKMALSFE) are Extracellular-facing. The chain crosses the membrane as a helical span at residues 120–143 (MLILGRFIIGLYSGLTTGFVPMYV). The Cytoplasmic segment spans residues 144 to 154 (GEVSPTALRGA). The chain crosses the membrane as a helical span at residues 155–175 (LGTFHQLGIVLGILIAQVFGL). Q160 contacts D-glucose. At 176–184 (DLIMGNDSL) the chain is on the extracellular side. A helical membrane pass occupies residues 185–205 (WPLLLGFIFVPALLQCIILPF). The Cytoplasmic segment spans residues 206-270 (APESPRFLLI…LFRSPMYRQP (65 aa)). The chain crosses the membrane as a helical span at residues 271 to 292 (ILIAIVLQLSQQLSGINAVFYY). D-glucose contacts are provided by residues 281 to 282 (QQ) and N287. Over 293–305 (STSIFEKSGVEQP) the chain is Extracellular. Residues 306–327 (VYATIGSGVVNTAFTVVSLFVV) form a helical membrane-spanning segment. A D-glucose-binding site is contributed by N316. The Cytoplasmic segment spans residues 328–333 (ERAGRR). Residues 334 to 354 (TLHLIGLAGMAGCAILMTIAL) traverse the membrane as a helical segment. Topologically, residues 355–364 (TLLDQMPWMS) are extracellular. A helical membrane pass occupies residues 365-387 (YLSIVAIFGFVAFFEIGPGPIPW). D-glucose is bound by residues E379 and W387. Residues 388–400 (FIVAELFSQGPRP) are Cytoplasmic-facing. Residues 401 to 421 (AAFAVAGLSNWTSNFIVGMGF) traverse the membrane as a helical segment. Residues 422–428 (QYIAQLC) lie on the Extracellular side of the membrane. The chain crosses the membrane as a helical span at residues 429–449 (GSYVFIIFTVLLVLFFIFTYF). The Cytoplasmic segment spans residues 450-490 (KVPETKGRTFDEIAYRFRQGGASQSDKTPDEFHSLGADSQV). A disordered region spans residues 470-490 (GASQSDKTPDEFHSLGADSQV).

This sequence belongs to the major facilitator superfamily. Sugar transporter (TC 2.A.1.1) family. Glucose transporter subfamily. In terms of assembly, interacts with isoform 1 of BSG. As to expression, retinal cones (at protein level).

The protein localises to the cell membrane. It is found in the photoreceptor inner segment. It carries out the reaction D-glucose(out) = D-glucose(in). In terms of biological role, facilitative glucose transporter, which is responsible for constitutive or basal glucose uptake. Has a very broad substrate specificity; can transport a wide range of aldoses including both pentoses and hexoses. Most important energy carrier of the brain: present at the blood-brain barrier and assures the energy-independent, facilitative transport of glucose into the brain. In association with BSG and NXNL1, promotes retinal cone survival by increasing glucose uptake into photoreceptors. Required for mesendoderm differentiation. This is Solute carrier family 2, facilitated glucose transporter member 1 from Gallus gallus (Chicken).